The chain runs to 362 residues: Peptide chain release factor 1 (362 aa).

Residue glutamine 236 is modified to N5-methylglutamine.

Belongs to the prokaryotic/mitochondrial release factor family. In terms of processing, methylated by PrmC. Methylation increases the termination efficiency of RF1.

It localises to the cytoplasm. Functionally, peptide chain release factor 1 directs the termination of translation in response to the peptide chain termination codons UAG and UAA. The polypeptide is Peptide chain release factor 1 (Lactobacillus helveticus (strain DPC 4571)).